The following is a 318-amino-acid chain: Acetyl-coenzyme A carboxylase carboxyl transferase subunit alpha (318 aa).

The CoA carboxyltransferase C-terminal domain maps to 32-293 (DLSQEIESLE…KKALQKHLGE (262 aa)).

This sequence belongs to the AccA family. As to quaternary structure, acetyl-CoA carboxylase is a heterohexamer composed of biotin carboxyl carrier protein (AccB), biotin carboxylase (AccC) and two subunits each of ACCase subunit alpha (AccA) and ACCase subunit beta (AccD).

The protein localises to the cytoplasm. It carries out the reaction N(6)-carboxybiotinyl-L-lysyl-[protein] + acetyl-CoA = N(6)-biotinyl-L-lysyl-[protein] + malonyl-CoA. Its pathway is lipid metabolism; malonyl-CoA biosynthesis; malonyl-CoA from acetyl-CoA: step 1/1. Functionally, component of the acetyl coenzyme A carboxylase (ACC) complex. First, biotin carboxylase catalyzes the carboxylation of biotin on its carrier protein (BCCP) and then the CO(2) group is transferred by the carboxyltransferase to acetyl-CoA to form malonyl-CoA. This is Acetyl-coenzyme A carboxylase carboxyl transferase subunit alpha from Syntrophomonas wolfei subsp. wolfei (strain DSM 2245B / Goettingen).